Here is a 359-residue protein sequence, read N- to C-terminus: Mitochondrial calcium uniporter regulator 1 (359 aa).

The Mitochondrial intermembrane segment spans residues 1–68 (MDCGSVGGQR…ARGGVSRASP (68 aa)). Residues 69–85 (LLLLLLVPSPRLAAAAP) traverse the membrane as a helical segment. The Mitochondrial matrix portion of the chain corresponds to 86-338 (RRQLGDWERS…LESHKLDNIK (253 aa)). A coiled-coil region spans residues 235–310 (EKSEFSALRA…VALHAQQDRA (76 aa)). Residues 339-358 (YLAGSIFTCLTVALGFYRLW) form a helical membrane-spanning segment. Ile359 is a topological domain (mitochondrial intermembrane).

It belongs to the CCDC90 family. Interacts (via coiled coil regions) with MCU; the interaction is direct. Interacts with SMDT1/EMRE; the interaction is direct. Interacts with PPIF. In terms of tissue distribution, ubiquitously expressed.

The protein localises to the mitochondrion inner membrane. Its function is as follows. Key regulator of mitochondrial calcium uniporter (MCU) required for calcium entry into mitochondrion. Plays a direct role in uniporter-mediated calcium uptake via a direct interaction with MCU. Probably involved in the assembly of the membrane components of the uniporter complex (uniplex). The protein is Mitochondrial calcium uniporter regulator 1 of Homo sapiens (Human).